The sequence spans 312 residues: Olfactory receptor 7D4 (312 aa).

At 1-25 (MEAENLTELSKFLLLGLSDDPELQP) the chain is on the extracellular side. Asn5 carries N-linked (GlcNAc...) asparagine glycosylation. A helical membrane pass occupies residues 26–46 (VLFGLFLSMYLVTVLGNLLII). Residues 47 to 54 (LAVSSDSH) lie on the Cytoplasmic side of the membrane. A helical transmembrane segment spans residues 55–75 (LHTPMYFFLSNLSFVDICFIS). Residues 76–99 (TTVPKMLVSIQARSKDISYMGCLT) are Extracellular-facing. A disulfide bridge connects residues Cys97 and Cys189. A helical membrane pass occupies residues 100–120 (QVYFLMMFAGMDTFLLAVMAY). Topologically, residues 121–139 (DRFVAICHPLHYTVIMNPC) are cytoplasmic. The helical transmembrane segment at 140–160 (LCGLLVLASWFIIFWFSLVHI) threads the bilayer. Residues 161–197 (LLMKRLTFSTGTEIPHFFCEPAQVLKVACSNTLLNNI) lie on the Extracellular side of the membrane. Residues 198 to 217 (VLYVATALLGVFPVAGILFS) traverse the membrane as a helical segment. At 218 to 237 (YSQIVSSLMGMSSTKGKYKA) the chain is on the cytoplasmic side. A helical membrane pass occupies residues 238–258 (FSTCGSHLCVVSLFYGTGLGV). The Extracellular segment spans residues 259–271 (YLSSAVTHSSQSS). Residues 272–292 (STASVMYAMVTPMLNPFIYSL) form a helical membrane-spanning segment. Residues 293–312 (RNKDVKGALERLLSRADSCP) lie on the Cytoplasmic side of the membrane.

This sequence belongs to the G-protein coupled receptor 1 family. Nasal olfactory epithelium.

Its subcellular location is the cell membrane. Its function is as follows. Odorant receptor. Selectively activated by androstenone and the related odorous steroid androstadienone. This Homo sapiens (Human) protein is Olfactory receptor 7D4 (OR7D4).